The chain runs to 156 residues: Ribosome-binding factor A (156 aa).

The interval 124–156 (TRAEYAGEAQPYRLEEEPEGSGDEVPPPGGDQR) is disordered.

Belongs to the RbfA family. Monomer. Binds 30S ribosomal subunits, but not 50S ribosomal subunits or 70S ribosomes.

It is found in the cytoplasm. One of several proteins that assist in the late maturation steps of the functional core of the 30S ribosomal subunit. Associates with free 30S ribosomal subunits (but not with 30S subunits that are part of 70S ribosomes or polysomes). Required for efficient processing of 16S rRNA. May interact with the 5'-terminal helix region of 16S rRNA. This chain is Ribosome-binding factor A, found in Salinispora tropica (strain ATCC BAA-916 / DSM 44818 / JCM 13857 / NBRC 105044 / CNB-440).